The following is a 651-amino-acid chain: Zinc metalloproteinase nas-32 (651 aa).

The signal sequence occupies residues 1–21 (MRRFFICYIGFLSIFLDFILA). A propeptide spanning residues 22–202 (DKDNNSEEER…EQSSKSRRKK (181 aa)) is cleaved from the precursor. Residues N25, N72, and N251 are each glycosylated (N-linked (GlcNAc...) asparagine). One can recognise a Peptidase M12A domain in the interval 203-394 (RQIDNLAQFW…KMLNTHYSCS (192 aa)). Cystine bridges form between C245–C393, C264–C283, C395–C412, C415–C426, C434–C467, and C495–C516. Residue H291 participates in Zn(2+) binding. The active site involves E292. 2 residues coordinate Zn(2+): H295 and H301. Residues 380-433 (TFLDLKMLNTHYSCSCPTILSCGNGGFTNPANCSVCICPYGFGGALCTERTDYG) form the EGF-like domain. N-linked (GlcNAc...) asparagine glycosylation is present at N411. The 121-residue stretch at 434–554 (CGSTLTATDT…TTYTWSYRYV (121 aa)) folds into the CUB domain. A glycan (N-linked (GlcNAc...) asparagine) is linked at N453. N557 carries an N-linked (GlcNAc...) asparagine glycan. 3 disulfide bridges follow: C610/C647, C619/C640, and C628/C644. Positions 610-647 (CKDRFPKSQCSTYSTNGMCTQQPPLAAEFSCAETCGFC) constitute a ShKT domain.

Zn(2+) is required as a cofactor. In terms of tissue distribution, expressed in pharyngeal, anal depressor, intestinal and vulva muscles, head neurons and head mesodermal cell.

It is found in the secreted. Functionally, metalloprotease. The protein is Zinc metalloproteinase nas-32 (nas-32) of Caenorhabditis elegans.